Here is a 141-residue protein sequence, read N- to C-terminus: Transcriptional regulator MraZ (141 aa).

SpoVT-AbrB domains follow at residues 5-47 and 76-119; these read TFNI…KPQD and ANFV…DKKL.

It belongs to the MraZ family. In terms of assembly, homooctamer. Forms a ring.

Its subcellular location is the cytoplasm. The protein resides in the nucleoid. The chain is Transcriptional regulator MraZ from Mycoplasma pneumoniae (strain ATCC 29342 / M129 / Subtype 1) (Mycoplasmoides pneumoniae).